Here is a 309-residue protein sequence, read N- to C-terminus: Carbamate kinase (309 aa).

The protein belongs to the carbamate kinase family.

The protein localises to the cytoplasm. It catalyses the reaction hydrogencarbonate + NH4(+) + ATP = carbamoyl phosphate + ADP + H2O + H(+). It participates in metabolic intermediate metabolism; carbamoyl phosphate degradation; CO(2) and NH(3) from carbamoyl phosphate: step 1/1. This Staphylococcus haemolyticus (strain JCSC1435) protein is Carbamate kinase (arcC).